The chain runs to 308 residues: Probable pyridoxal 5'-phosphate synthase subunit pdx-1 (308 aa).

D30 contacts D-ribose 5-phosphate. K87 acts as the Schiff-base intermediate with D-ribose 5-phosphate in catalysis. G159 contacts D-ribose 5-phosphate. A D-glyceraldehyde 3-phosphate-binding site is contributed by R171. Residues G224 and 245 to 246 (GS) contribute to the D-ribose 5-phosphate site.

Belongs to the PdxS/SNZ family.

It catalyses the reaction aldehydo-D-ribose 5-phosphate + D-glyceraldehyde 3-phosphate + L-glutamine = pyridoxal 5'-phosphate + L-glutamate + phosphate + 3 H2O + H(+). It functions in the pathway cofactor biosynthesis; pyridoxal 5'-phosphate biosynthesis. In terms of biological role, catalyzes the formation of pyridoxal 5'-phosphate from ribose 5-phosphate (RBP), glyceraldehyde 3-phosphate (G3P) and ammonia. The ammonia is provided by pdx-2. Can also use ribulose 5-phosphate and dihydroxyacetone phosphate as substrates, resulting from enzyme-catalyzed isomerization of RBP and G3P, respectively. Also plays an indirect role in resistance to singlet oxygen-generating photosensitizers. This is Probable pyridoxal 5'-phosphate synthase subunit pdx-1 (pdx-1) from Neurospora crassa (strain ATCC 24698 / 74-OR23-1A / CBS 708.71 / DSM 1257 / FGSC 987).